The primary structure comprises 603 residues: Probable HECT-type ubiquitin ligase-interacting protein creD (603 aa).

Disordered regions lie at residues 375–398 (ELDPNGYRTPGPGSGPGTPFGTLS) and 432–499 (LNIT…MATP). Basic and acidic residues predominate over residues 443 to 455 (TDHESQNDSEHRR). The span at 465–481 (PSSGSNSHSPSSPVLSR) shows a compositional bias: low complexity. Positions 482-492 (RPSDEVDHEHV) are enriched in basic and acidic residues.

Belongs to the arrestin family. In terms of assembly, interacts with hulA.

Its function is as follows. Component of the regulatory network controlling carbon source utilization through ubiquitination and deubiquitination involving creA, creB, creC, creD and acrB. May be involved in signaling by recognizing appropriately phosphorylated substrates via its arrestin domains and then recruit a HECT-type ubiquitin ligase such as hulA, leading to ubiquitination of the substrate, providing a link between ubiquitination and phosphorylation in protein regulation and stability. In Aspergillus flavus (strain ATCC 200026 / FGSC A1120 / IAM 13836 / NRRL 3357 / JCM 12722 / SRRC 167), this protein is Probable HECT-type ubiquitin ligase-interacting protein creD (creD).